The primary structure comprises 40 residues: Dolichyl-diphosphooligosaccharide--protein glycosyltransferase subunit 4 (40 aa).

Residues 1-4 lie on the Lumenal side of the membrane; sequence MITD. A helical membrane pass occupies residues 5-25; that stretch reads VQLAIFSNVLGVFLFLLVVAY. Topologically, residues 26–40 are cytoplasmic; sequence HYINANTGKPIPKAK.

Belongs to the OST4 family. In terms of assembly, component of the oligosaccharyltransferase (OST) complex.

The protein localises to the endoplasmic reticulum membrane. In terms of biological role, subunit of the oligosaccharyl transferase (OST) complex that catalyzes the initial transfer of a defined glycan (Glc(3)Man(9)GlcNAc(2) in eukaryotes) from the lipid carrier dolichol-pyrophosphate to an asparagine residue within an Asn-X-Ser/Thr consensus motif in nascent polypeptide chains, the first step in protein N-glycosylation. N-glycosylation occurs cotranslationally and the complex associates with the Sec61 complex at the channel-forming translocon complex that mediates protein translocation across the endoplasmic reticulum (ER). All subunits are required for a maximal enzyme activity. In Drosophila ananassae (Fruit fly), this protein is Dolichyl-diphosphooligosaccharide--protein glycosyltransferase subunit 4.